A 436-amino-acid chain; its full sequence is Protein sof1 (436 aa).

WD repeat units follow at residues 62-102 (GHQD…ERWT), 105-143 (AHEG…VKRS), 145-175 (LGDS…WDYS), 176-225 (RDTP…PLTK), 227-267 (ITKL…RALH), 271-310 (DHVS…SRDV), and 314-353 (KRMQ…RASI). The segment at 411–436 (NIRRHSKKGAVPYEKERERHVVGIQK) is disordered. Basic and acidic residues predominate over residues 423–436 (YEKERERHVVGIQK).

This sequence belongs to the WD repeat DCAF13/WDSOF1 family. As to quaternary structure, interacts with snoRNA U3. Component of the ribosomal small subunit (SSU) processome composed of at least 40 protein subunits and snoRNA U3.

It is found in the nucleus. The protein resides in the nucleolus. Its subcellular location is the cytoplasm. The protein localises to the cytoskeleton. It localises to the spindle. Functionally, required for ribosomal RNA processing. The protein is Protein sof1 (sof1) of Schizosaccharomyces pombe (strain 972 / ATCC 24843) (Fission yeast).